Reading from the N-terminus, the 221-residue chain is Endonuclease V (221 aa).

Positions 38 and 104 each coordinate Mg(2+).

Belongs to the endonuclease V family. Mg(2+) serves as cofactor.

The protein resides in the cytoplasm. It carries out the reaction Endonucleolytic cleavage at apurinic or apyrimidinic sites to products with a 5'-phosphate.. Functionally, DNA repair enzyme involved in the repair of deaminated bases. Selectively cleaves double-stranded DNA at the second phosphodiester bond 3' to a deoxyinosine leaving behind the intact lesion on the nicked DNA. Recognizes only deoxyinosine. This is Endonuclease V from Archaeoglobus fulgidus (strain ATCC 49558 / DSM 4304 / JCM 9628 / NBRC 100126 / VC-16).